The primary structure comprises 599 residues: Nucleosomal histone kinase 1 (599 aa).

Residues 47 to 328 (WRIGPSIGVG…PDYDKCRSWF (282 aa)) enclose the Protein kinase domain. ATP is bound by residues 53–61 (IGVGGFGEI) and Lys77. Asp183 acts as the Proton acceptor in catalysis. Disordered stretches follow at residues 340-507 (NGDL…PQPR) and 532-599 (RKKK…KYQG). Residues 349–361 (PQTSSNNNLSPPG) show a composition bias toward polar residues. A phosphoserine mark is found at Ser376, Ser381, Ser382, Ser388, and Ser390. A compositionally biased stretch (basic and acidic residues) spans 435–448 (VKTEPKSTPRERAT). Ser483 carries the post-translational modification Phosphoserine. The span at 546–558 (SRTPSSRSALASS) shows a compositional bias: low complexity. Phosphoserine is present on residues Ser564 and Ser586. Thr589 bears the Phosphothreonine mark.

Belongs to the protein kinase superfamily. CK1 Ser/Thr protein kinase family. VRK subfamily. May interact with Unc-89 (via protein kinase domain 1). Interacts with L(2)gl. Requires Mg(2+) as cofactor. In terms of processing, phosphorylated during mitosis and female meiosis. Expressed in ovaries (at protein level). Expressed in indirect flight muscle (IFM) (at protein level).

Its subcellular location is the cytoplasm. The protein localises to the nucleus. The protein resides in the chromosome. It localises to the myofibril. It is found in the sarcomere. Its subcellular location is the z line. The protein localises to the m line. The catalysed reaction is L-seryl-[protein] + ATP = O-phospho-L-seryl-[protein] + ADP + H(+). It catalyses the reaction L-threonyl-[protein] + ATP = O-phospho-L-threonyl-[protein] + ADP + H(+). In terms of biological role, serine/threonine-protein kinase involved in somatic mitosis and female meiosis. Required for spindle organization in mitosis, and for the establishment or maintenance of meiosis-specific chromosomal configurations, including the prophase I karyosome and the metaphase I spindle. Specifically phosphorylates nucleosomal H2A on 'Thr-119'. Required for the development and organization of indirect flight muscle sarcomeres by regulating the formation of M line and H zone and the correct assembly of thick and thin filaments in the sarcomere. The chain is Nucleosomal histone kinase 1 (ball) from Drosophila melanogaster (Fruit fly).